Here is a 734-residue protein sequence, read N- to C-terminus: E3 ubiquitin-protein ligase TRIM56 (734 aa).

The RING-type zinc-finger motif lies at 21–60 (CKICLEQLHTPKTLPCLHTYCQDCLAQLDIGGQVRCPECR). B box-type zinc fingers lie at residues 98-149 (KPTC…VVDL) and 164-205 (RQAS…CLPL). Residues C169, H172, C192, and H197 each contribute to the Zn(2+) site. Positions 215–303 (GLEELLAGVD…KIERQEQVAK (89 aa)) form a coiled coil. Residues 372–381 (EPKQSPKDSG) are compositionally biased toward basic and acidic residues. The tract at residues 372-463 (EPKQSPKDSG…SPILRPNLEG (92 aa)) is disordered. Residues 435-448 (RPNKKKKCKGRGKS) are compositionally biased toward basic residues. S454 is subject to Phosphoserine.

Belongs to the TRIM/RBCC family. In terms of assembly, interacts with STING1. Interacts with TICAM1.

Its subcellular location is the cytoplasm. It catalyses the reaction S-ubiquitinyl-[E2 ubiquitin-conjugating enzyme]-L-cysteine + [acceptor protein]-L-lysine = [E2 ubiquitin-conjugating enzyme]-L-cysteine + N(6)-ubiquitinyl-[acceptor protein]-L-lysine.. It participates in protein modification; protein ubiquitination. Its function is as follows. E3 ubiquitin-protein ligase that plays a key role in innate antiviral immunity by mediating ubiquitination of CGAS and STING1. In response to pathogen- and host-derived double-stranded DNA (dsDNA), targets STING1 to 'Lys-63'-linked ubiquitination, thereby promoting its homodimerization, a step required for the production of type I interferon IFN-beta. Also mediates monoubiquitination of CGAS, thereby promoting CGAS oligomerization and subsequent activation. Independently of its E3 ubiquitin ligase activity, positive regulator of TLR3 signaling. Potentiates extracellular double stranded RNA (dsRNA)-induced expression of IFNB1 and interferon-stimulated genes ISG15, IFIT1/ISG56, CXCL10, OASL and CCL5/RANTES. This chain is E3 ubiquitin-protein ligase TRIM56, found in Mus musculus (Mouse).